The sequence spans 412 residues: Thyroxine-binding globulin (412 aa).

An N-terminal signal peptide occupies residues 1–16 (MPLFFSLVLLILGLHC). N-linked (GlcNAc...) asparagine glycans are attached at residues asparagine 35, asparagine 98, asparagine 164, and asparagine 252. Residues asparagine 292 and lysine 395 each contribute to the thyroxine site.

The protein belongs to the serpin family. In terms of tissue distribution, expressed by the liver and secreted in plasma.

Its subcellular location is the secreted. Functionally, major thyroid hormone transport protein in serum. The sequence is that of Thyroxine-binding globulin (SERPINA7) from Ovis aries (Sheep).